The chain runs to 226 residues: MVKPPAGGNEGGRGKPARLKTAYGRTPSQQAWLERQINDPFSAKARALGYRSRAAFKISEIDDKFHFFSKGAKVIDLGCAPGGWLQIAVERGVTTLAGIDLLPVDPVAPAHLLEMDFTADGAPEKLLELLGGEPDLVMSDMAPNTVGHRETDHLRIVGLIEIAAEFAIDVLKPGGAFVAKAFQGGETAEIIGKLKRHFDKVQHFKPKASRQDSSEVFLVATGFKGR.

Residues 1 to 25 form a disordered region; that stretch reads MVKPPAGGNEGGRGKPARLKTAYGR. S-adenosyl-L-methionine is bound by residues Gly82, Trp84, Asp100, Asp116, and Asp140. Lys180 (proton acceptor) is an active-site residue.

It belongs to the class I-like SAM-binding methyltransferase superfamily. RNA methyltransferase RlmE family.

The protein localises to the cytoplasm. It carries out the reaction uridine(2552) in 23S rRNA + S-adenosyl-L-methionine = 2'-O-methyluridine(2552) in 23S rRNA + S-adenosyl-L-homocysteine + H(+). Functionally, specifically methylates the uridine in position 2552 of 23S rRNA at the 2'-O position of the ribose in the fully assembled 50S ribosomal subunit. The polypeptide is Ribosomal RNA large subunit methyltransferase E (Caulobacter vibrioides (strain ATCC 19089 / CIP 103742 / CB 15) (Caulobacter crescentus)).